The primary structure comprises 213 residues: CDP-diacylglycerol--inositol 3-phosphatidyltransferase (213 aa).

Residues 1 to 5 (MPEEN) are Cytoplasmic-facing. The helical transmembrane segment at 6–26 (IFLFVPNLIGYARIVFAIISF) threads the bilayer. Tyr27 is a topological domain (lumenal). The chain crosses the membrane as a helical span at residues 28–48 (FMPCCPFTASSFYLLSGLLDA). Residues Asp47 and Asp50 each contribute to the Mg(2+) site. Topologically, residues 49–73 (FDGHAARALNQGTRFGAMLDMLTDR) are cytoplasmic. Residues Gly51, Arg55, and Thr61 each coordinate a CDP-1,2-diacyl-sn-glycerol. The Mg(2+) site is built by Asp68 and Asp72. Residue Asp72 is the Proton acceptor of the active site. A helical transmembrane segment spans residues 74 to 94 (CATMCLLVNLALLYPRATLLF). Position 95 (Gln95) is a topological domain, lumenal. The chain crosses the membrane as a helical span at residues 96–116 (LSMSLDVASHWLHLHSSVVRG). Topologically, residues 117–139 (SESHKMIDLSGNPVLRIYYTSRP) are cytoplasmic. Residues 140–160 (ALFTLCAGNELFYCLLYLFNF) traverse the membrane as a helical segment. Over 161–174 (SEGPLVGSVGLFRM) the chain is Lumenal. A helical membrane pass occupies residues 175–195 (GLWITAPIALLKSIISVIHLV). Topologically, residues 196 to 213 (TAARNMAALDAADRAKKK) are cytoplasmic.

It belongs to the CDP-alcohol phosphatidyltransferase class-I family. The cofactor is Mn(2+). Requires Mg(2+) as cofactor. In terms of tissue distribution, detected in liver (at protein level). Widely expressed. Highly expressed in the brain and kidney; lower levels in heart, spleen, lung, liver, skeletal muscle and testis.

It localises to the endoplasmic reticulum membrane. Its subcellular location is the cell membrane. It catalyses the reaction a CDP-1,2-diacyl-sn-glycerol + myo-inositol = a 1,2-diacyl-sn-glycero-3-phospho-(1D-myo-inositol) + CMP + H(+). Functionally, catalyzes the biosynthesis of phosphatidylinositol (PtdIns) as well as PtdIns:inositol exchange reaction. May thus act to reduce an excessive cellular PtdIns content. The exchange activity is due to the reverse reaction of PtdIns synthase and is dependent on CMP, which is tightly bound to the enzyme. In Rattus norvegicus (Rat), this protein is CDP-diacylglycerol--inositol 3-phosphatidyltransferase.